Reading from the N-terminus, the 273-residue chain is Putative pyruvate, phosphate dikinase regulatory protein (273 aa).

153 to 160 (GVSRTSKT) is a binding site for ADP.

It belongs to the pyruvate, phosphate/water dikinase regulatory protein family. PDRP subfamily.

The catalysed reaction is N(tele)-phospho-L-histidyl/L-threonyl-[pyruvate, phosphate dikinase] + ADP = N(tele)-phospho-L-histidyl/O-phospho-L-threonyl-[pyruvate, phosphate dikinase] + AMP + H(+). The enzyme catalyses N(tele)-phospho-L-histidyl/O-phospho-L-threonyl-[pyruvate, phosphate dikinase] + phosphate + H(+) = N(tele)-phospho-L-histidyl/L-threonyl-[pyruvate, phosphate dikinase] + diphosphate. In terms of biological role, bifunctional serine/threonine kinase and phosphorylase involved in the regulation of the pyruvate, phosphate dikinase (PPDK) by catalyzing its phosphorylation/dephosphorylation. This Rhizobium meliloti (strain 1021) (Ensifer meliloti) protein is Putative pyruvate, phosphate dikinase regulatory protein.